Reading from the N-terminus, the 267-residue chain is Urease accessory protein UreD 2 (267 aa).

This sequence belongs to the UreD family. UreD, UreF and UreG form a complex that acts as a GTP-hydrolysis-dependent molecular chaperone, activating the urease apoprotein by helping to assemble the nickel containing metallocenter of UreC. The UreE protein probably delivers the nickel.

The protein localises to the cytoplasm. Required for maturation of urease via the functional incorporation of the urease nickel metallocenter. The sequence is that of Urease accessory protein UreD 2 from Synechococcus sp. (strain JA-3-3Ab) (Cyanobacteria bacterium Yellowstone A-Prime).